Here is a 303-residue protein sequence, read N- to C-terminus: Probable 5-dehydro-4-deoxyglucarate dehydratase (303 aa).

The protein belongs to the DapA family.

The catalysed reaction is 5-dehydro-4-deoxy-D-glucarate + H(+) = 2,5-dioxopentanoate + CO2 + H2O. Its pathway is carbohydrate acid metabolism; D-glucarate degradation; 2,5-dioxopentanoate from D-glucarate: step 2/2. The polypeptide is Probable 5-dehydro-4-deoxyglucarate dehydratase (Pseudomonas putida (strain W619)).